Here is a 233-residue protein sequence, read N- to C-terminus: MSACQTPLIVALDFPTRDAALKLADQLDPALCRVKVGKELFTSSASGIVETLCAKGFEVFLDLKFHDIPNTTAMAVKAAAEMGVWMVNVHCSGGLRMMSACREELAKRSGPQPLLIGVTVLTSMEREDLAGIGLDVDPQVQVLRLAALAQKAGMDGLVCSALEAPALKAAHPSLQLVTPGIRPAGSAQDDQRRILTPRQALDAGSDYLVIGRPISQAADPAKALAAVVAEIRG.

Substrate contacts are provided by residues Asp13, Lys35, 62–71 (DLKFHDIPNT), Thr122, Arg182, Gln191, Gly211, and Arg212. The Proton donor role is filled by Lys64.

It belongs to the OMP decarboxylase family. Type 1 subfamily. Homodimer.

It catalyses the reaction orotidine 5'-phosphate + H(+) = UMP + CO2. It functions in the pathway pyrimidine metabolism; UMP biosynthesis via de novo pathway; UMP from orotate: step 2/2. Functionally, catalyzes the decarboxylation of orotidine 5'-monophosphate (OMP) to uridine 5'-monophosphate (UMP). This is Orotidine 5'-phosphate decarboxylase from Pseudomonas entomophila (strain L48).